The chain runs to 416 residues: Phosphoglycerate kinase (416 aa).

Substrate contacts are provided by residues Asp-24 to Asn-26, Arg-40, His-63 to Arg-66, Arg-126, and Arg-166. ATP contacts are provided by residues Lys-216, Gly-304, Glu-335, and Gly-364–Ser-367.

The protein belongs to the phosphoglycerate kinase family. As to quaternary structure, monomer.

The protein localises to the cytoplasm. The catalysed reaction is (2R)-3-phosphoglycerate + ATP = (2R)-3-phospho-glyceroyl phosphate + ADP. It functions in the pathway carbohydrate degradation; glycolysis; pyruvate from D-glyceraldehyde 3-phosphate: step 2/5. In Mycobacterium leprae (strain Br4923), this protein is Phosphoglycerate kinase.